The primary structure comprises 66 residues: Protein translocase subunit SecE (66 aa).

A helical transmembrane segment spans residues 29-49 (LVASTLVVVVAVFIFSLTCLV).

The protein belongs to the SecE/SEC61-gamma family. Component of the Sec protein translocase complex. Heterotrimer consisting of SecY, SecE and SecG subunits. The heterotrimers can form oligomers, although 1 heterotrimer is thought to be able to translocate proteins. Interacts with the ribosome. Interacts with SecDF, and other proteins may be involved. Interacts with SecA.

The protein localises to the cell inner membrane. Essential subunit of the Sec protein translocation channel SecYEG. Clamps together the 2 halves of SecY. May contact the channel plug during translocation. This Rickettsia rickettsii protein is Protein translocase subunit SecE.